Consider the following 736-residue polypeptide: 1,4-alpha-glucan branching enzyme GlgB (736 aa).

Residue Asp-419 is the Nucleophile of the active site. Glu-472 acts as the Proton donor in catalysis.

Belongs to the glycosyl hydrolase 13 family. GlgB subfamily. As to quaternary structure, monomer.

It catalyses the reaction Transfers a segment of a (1-&gt;4)-alpha-D-glucan chain to a primary hydroxy group in a similar glucan chain.. It functions in the pathway glycan biosynthesis; glycogen biosynthesis. In terms of biological role, catalyzes the formation of the alpha-1,6-glucosidic linkages in glycogen by scission of a 1,4-alpha-linked oligosaccharide from growing alpha-1,4-glucan chains and the subsequent attachment of the oligosaccharide to the alpha-1,6 position. In Rhizobium meliloti (strain 1021) (Ensifer meliloti), this protein is 1,4-alpha-glucan branching enzyme GlgB.